The primary structure comprises 378 residues: Mas-related G-protein coupled receptor MRG (378 aa).

The Extracellular segment spans residues 1-77; sequence MVWGKICWFS…VGQQALPLNI (77 aa). Residues asparagine 54 and asparagine 57 are each glycosylated (N-linked (GlcNAc...) asparagine). Residues 78–101 form a helical membrane-spanning segment; the sequence is IAPKAVLVSLCGVLLNGTVFWLLC. Over 102–109 the chain is Cytoplasmic; the sequence is CGATNPYM. Residues 110 to 136 form a helical membrane-spanning segment; it reads VYILHLVAADVIYLCCSAVGFLQVTLL. The Extracellular portion of the chain corresponds to 137 to 154; sequence TYHGVVFFIPDFLAILSP. A helical transmembrane segment spans residues 155 to 169; that stretch reads FSFEVCLCLLVAIST. Topologically, residues 170 to 191 are cytoplasmic; the sequence is ERCVCVLFPIWYRCHRPKYTSN. The chain crosses the membrane as a helical span at residues 192 to 207; sequence VVCTLIWGLPFCINIV. Topologically, residues 208-221 are extracellular; that stretch reads KSLFLTYWKHVKAC. Residues 222 to 248 traverse the membrane as a helical segment; that stretch reads VIFLKLSGLFHAILSLVMCVSSLTLLI. At 249-264 the chain is on the cytoplasmic side; sequence RFLCCSQQQKATRVYA. A helical membrane pass occupies residues 265–286; the sequence is VVQISAPMFLLWALPLSVAPLI. At 287–297 the chain is on the extracellular side; sequence TDFKMFVTTSY. Residues 298–317 traverse the membrane as a helical segment; the sequence is LISLFLIINSSANPIIYFFV. Residues 318-378 lie on the Cytoplasmic side of the membrane; sequence GSLRKKRLKE…PREHRVDVET (61 aa). Residues 344–378 are disordered; that stretch reads GRNKKAAGIDPMEQPHSTQHVENLLPREHRVDVET. The segment covering 368–378 has biased composition (basic and acidic residues); sequence LPREHRVDVET.

It belongs to the G-protein coupled receptor 1 family. Mas subfamily.

It is found in the cell membrane. The protein is Mas-related G-protein coupled receptor MRG (MAS1L) of Homo sapiens (Human).